The chain runs to 278 residues: Tryptophan synthase alpha chain (278 aa).

Catalysis depends on proton acceptor residues Glu50 and Asp61.

The protein belongs to the TrpA family. In terms of assembly, tetramer of two alpha and two beta chains.

It carries out the reaction (1S,2R)-1-C-(indol-3-yl)glycerol 3-phosphate + L-serine = D-glyceraldehyde 3-phosphate + L-tryptophan + H2O. It participates in amino-acid biosynthesis; L-tryptophan biosynthesis; L-tryptophan from chorismate: step 5/5. Its function is as follows. The alpha subunit is responsible for the aldol cleavage of indoleglycerol phosphate to indole and glyceraldehyde 3-phosphate. The chain is Tryptophan synthase alpha chain from Nitrobacter hamburgensis (strain DSM 10229 / NCIMB 13809 / X14).